The chain runs to 217 residues: UPF0502 protein AHA_2872 (217 aa).

The protein belongs to the UPF0502 family.

This Aeromonas hydrophila subsp. hydrophila (strain ATCC 7966 / DSM 30187 / BCRC 13018 / CCUG 14551 / JCM 1027 / KCTC 2358 / NCIMB 9240 / NCTC 8049) protein is UPF0502 protein AHA_2872.